The primary structure comprises 203 residues: Protein-methionine-sulfoxide reductase heme-binding subunit MsrQ (203 aa).

Helical transmembrane passes span 10 to 30 (IFVV…MSLL), 42 to 62 (LGLG…LQKL), 75 to 95 (LGLW…FFIL), 110 to 130 (PYII…ITSN), 147 to 167 (LVYA…RSDL), and 169 to 189 (EWSI…PAVA).

The protein belongs to the MsrQ family. Heterodimer of a catalytic subunit (MsrP) and a heme-binding subunit (MsrQ). FMN is required as a cofactor. Requires heme b as cofactor.

It is found in the cell inner membrane. Functionally, part of the MsrPQ system that repairs oxidized periplasmic proteins containing methionine sulfoxide residues (Met-O), using respiratory chain electrons. Thus protects these proteins from oxidative-stress damage caused by reactive species of oxygen and chlorine generated by the host defense mechanisms. MsrPQ is essential for the maintenance of envelope integrity under bleach stress, rescuing a wide series of structurally unrelated periplasmic proteins from methionine oxidation. MsrQ provides electrons for reduction to the reductase catalytic subunit MsrP, using the quinone pool of the respiratory chain. The chain is Protein-methionine-sulfoxide reductase heme-binding subunit MsrQ from Pseudomonas putida (strain GB-1).